A 307-amino-acid polypeptide reads, in one-letter code: Sporulation sigma-E factor-processing peptidase (307 aa).

Transmembrane regions (helical) follow at residues 7 to 27, 36 to 56, 57 to 77, 89 to 109, and 127 to 147; these read LIWM…AVVL, LLLG…PFSH, LMVH…MTFG, LTFY…HFLF, and FGDP…SYFS. Residue Asp183 is part of the active site.

This sequence belongs to the peptidase U4 family. In terms of assembly, self-associates. Interacts with SigE. Interacts with SpoIIR.

It localises to the cell membrane. Probable aspartic protease that is responsible for the proteolytic cleavage of the RNA polymerase sigma E factor (SigE/spoIIGB) to yield the active peptide in the mother cell during sporulation. Responds to a signal from the forespore that is triggered by the extracellular signal protein SpoIIR. The protein is Sporulation sigma-E factor-processing peptidase of Priestia megaterium (strain ATCC 12872 / QMB1551) (Bacillus megaterium).